We begin with the raw amino-acid sequence, 477 residues long: ETS translocation variant 1 (477 aa).

Phosphoserine is present on serine 94. A disordered region spans residues proline 128–serine 178. Serine 191 and serine 216 each carry phosphoserine; by RPS6KA1 and RPS6KA5. Lysine 317 is covalently cross-linked (Glycyl lysine isopeptide (Lys-Gly) (interchain with G-Cter in SUMO2)). The ETS DNA-binding region spans leucine 335–valine 415.

The protein belongs to the ETS family. In terms of processing, sumoylated. Post-translationally, phosphorylated at Ser-191 and Ser-216 by RPS6KA1 and RPS6KA5; phosphorylation activates transcriptional activity.

The protein localises to the nucleus. Functionally, transcriptional activator that binds to DNA sequences containing the consensus pentanucleotide 5'-CGGA[AT]-3'. Required for olfactory dopaminergic neuron differentiation; may directly activate expression of tyrosine hydroxylase (TH). The chain is ETS translocation variant 1 (ETV1) from Bos taurus (Bovine).